A 353-amino-acid polypeptide reads, in one-letter code: Paraneoplastic antigen Ma1 homolog (353 aa).

This sequence belongs to the PNMA family. Predominantly expressed in testis. Very low levels in the brain, including in the piriform cortex, hippocampus and some subcortical nuclei.

The protein localises to the nucleus. The protein resides in the nucleolus. The sequence is that of Paraneoplastic antigen Ma1 homolog (Pnma1) from Mus musculus (Mouse).